We begin with the raw amino-acid sequence, 687 residues long: Pre-mRNA-splicing factor CLF1 (687 aa).

HAT repeat units lie at residues 45–77 (EYQR…FEIE), 79–111 (HDMR…AELK), 113–145 (KCIN…VEES), 147–178 (NNVE…FEIR), 180–211 (KNWN…FENR), 213–247 (GNTE…AKLV), 251–283 (AHWE…LKAG), 300–332 (TISY…LISE), 337–369 (QIMQ…LWMR), 383–416 (LEEE…FLIR), 451–483 (KEFD…LEEN), 525–557 (QEFE…YQTS), and 629–661 (LDQE…YIFP).

The protein belongs to the crooked-neck family. Belongs to the NTC complex (or PRP19-associated complex), composed of at least CEF1, CLF1, ISY1, NTC20, SNT309, SYF1, SYF2, and PRP19. The NTC complex associates with the spliceosome after the release of the U1 and U4 snRNAs and forms the CWC spliceosome subcomplex (or CEF1-associated complex) reminiscent of a late-stage spliceosome composed also of the U2, U5 and U6 snRNAs and at least BUD13, BUD31, BRR2, CDC40, CUS1, CWC2, CWC15, CWC21, CWC22, CWC23, CWC24, CWC25, CWC27, ECM2, HSH155, IST3, LEA1, MSL1, PRP8, PRP9, PRP11, PRP21, PRP22, PRP45, PRP46, SLU7, SMB1, SMD1, SMD2, SMD3, SMX2, SMX3, SNU114, SPP2, RSE1 and YJU2. Interacts with CEF1, ISY1, MUD2, NTC20, PRP22, PRP40, PRP46, SYF1, SYF2, and the ORC2 subunit of the origin recognition complex.

Its subcellular location is the nucleus. Its function is as follows. Involved in pre-mRNA splicing and cell cycle progression. Required for the spliceosome assembly by promoting the functional integration of the U4/U6.U5 tri-snRNP particle into the U1-, U2-dependent pre-spliceosome. Also recruits PRP19 to the spliceosome, as a component of the NTC complex (or PRP19-associated complex). The association of the NTC complex to the spliceosome mediates conformational rearrangement or stabilizes the structure of the spliceosome after U4 snRNA dissociation, which leads to spliceosome maturation. Required for initiation of the DNA replication by binding the RNA replication origins, probably through its interaction with the origin recognition complex (ORC). In Saccharomyces cerevisiae (strain ATCC 204508 / S288c) (Baker's yeast), this protein is Pre-mRNA-splicing factor CLF1 (CLF1).